A 1612-amino-acid polypeptide reads, in one-letter code: Roundabout homolog 1 (1612 aa).

A signal peptide spans Met1 to Gly19. The Extracellular portion of the chain corresponds to Ser20–Pro858. Ig-like C2-type domains are found at residues Pro29 to Glu125, Asp131 to Thr218, Pro223 to Thr307, Pro312 to Thr407, and Pro416 to Glu502. Residues Cys50 and Cys108 are joined by a disulfide bond. Residue Asn121 is glycosylated (N-linked (GlcNAc...) asparagine). Intrachain disulfides connect Cys152-Cys201, Cys244-Cys291, and Cys333-Cys389. The N-linked (GlcNAc...) asparagine glycan is linked to Asn424. A disulfide bridge connects residues Cys437 and Cys486. 3 Fibronectin type-III domains span residues Ala524–Val618, Val637–Glu734, and Pro739–His835. Residues Asn751, Asn781, and Asn788 are each glycosylated (N-linked (GlcNAc...) asparagine). The chain crosses the membrane as a helical span at residues Ala859–Leu879. The Cytoplasmic portion of the chain corresponds to Tyr880–Ser1612. Ser901 carries the post-translational modification Phosphoserine. Thr909 carries the post-translational modification Phosphothreonine. Position 999 is a phosphotyrosine (Tyr999). Position 1016 is a phosphoserine (Ser1016). The residue at position 1034 (Tyr1034) is a Phosphotyrosine. The disordered stretch occupies residues Ser1045–Pro1068. A Phosphotyrosine modification is found at Tyr1075. 3 disordered regions span residues Arg1088–Glu1298, Glu1313–Phe1358, and Arg1381–Ser1612. Polar residues predominate over residues Pro1098–Thr1107. A compositionally biased stretch (low complexity) spans Gly1108–Gln1124. The segment covering Leu1147–His1157 has biased composition (pro residues). A Phosphothreonine modification is found at Thr1201. The span at Tyr1216–Glu1230 shows a compositional bias: polar residues. Residues Asp1242 to Arg1254 show a composition bias toward basic and acidic residues. Residues Val1257–Pro1268 show a composition bias toward pro residues. Ser1258 carries the phosphoserine modification. A compositionally biased stretch (acidic residues) spans Met1283–Met1297. Residues Ser1345–Phe1358 show a composition bias toward low complexity. The segment covering Pro1399 to Ser1412 has biased composition (polar residues). Residues Arg1420–His1431 are compositionally biased toward basic residues. The span at Leu1441–Ile1451 shows a compositional bias: pro residues. Basic and acidic residues-rich tracts occupy residues Ala1477–Thr1502 and Asp1510–Pro1534. Residues Phe1553–Pro1562 show a composition bias toward polar residues. The span at Ser1563–Ser1575 shows a compositional bias: low complexity. Residues Asn1603 to Ser1612 show a composition bias toward acidic residues.

Belongs to the immunoglobulin superfamily. ROBO family. Homodimer. Dimerization is mediated by the extracellular domain and is independent of SLIT liganding. Interacts with SLIT1 Interacts with SLIT2. Interacts with FLRT3. Interacts with MYO9B (via Rho-GAP domain). Ubiquitinated. May be deubiquitinated by USP33. Detected in embryonic thalamus neurons (at protein level). Expressed in embryonal spinal cord. Expressed in embryonal lung, and in adult lung bronchial epithelial cells of large proximal airways.

It is found in the cell membrane. The protein resides in the cell projection. The protein localises to the axon. Its subcellular location is the endoplasmic reticulum-Golgi intermediate compartment membrane. Its function is as follows. Receptor for SLIT1 and SLIT2 that mediates cellular responses to molecular guidance cues in cellular migration, including axonal navigation at the ventral midline of the neural tube and projection of axons to different regions during neuronal development. Interaction with the intracellular domain of FLRT3 mediates axon attraction towards cells expressing NTN1. In axon growth cones, the silencing of the attractive effect of NTN1 by SLIT2 may require the formation of a ROBO1-DCC complex. Plays a role in the regulation of cell migration via its interaction with MYO9B; inhibits MYO9B-mediated stimulation of RHOA GTPase activity, and thereby leads to increased levels of active, GTP-bound RHOA. May be required for lung development. This chain is Roundabout homolog 1 (Robo1), found in Mus musculus (Mouse).